Here is a 967-residue protein sequence, read N- to C-terminus: Protein moonraker (967 aa).

Residues 178 to 201 (SHPGQSDLTVPNSPPTHDPGLQPH) are disordered. Polar residues predominate over residues 179–188 (HPGQSDLTVP). Phosphoserine occurs at positions 287 and 409. 2 disordered regions span residues 401–431 (ALER…SRPS) and 490–601 (KAGK…SHLT). Polar residues predominate over residues 525–543 (QSQPHSKSRVQQTTVSSRL). A compositionally biased stretch (pro residues) spans 557–568 (WIPPNPTSPPAS). Residues 616–642 (AETSKRLKELEELKAKEIDSMQKQRLD) adopt a coiled-coil conformation. 2 positions are modified to phosphoserine: serine 700 and serine 826. Residues 849-872 (RPCNGNSLDESVGTEEGSEKREAP) form a disordered region. Residues 885–967 (GRAPLFVPPG…FTSEFLEAAT (83 aa)) form a necessary and sufficient for CEP20-binding region.

Interacts with CEP63. Interacts with WDR62. Forms a complex with OFD1 and CEP20/FOR20. Interacts with PCM1.

The protein localises to the cytoplasm. It is found in the cytoskeleton. The protein resides in the microtubule organizing center. Its subcellular location is the centrosome. It localises to the centriole. The protein localises to the centriolar satellite. Its function is as follows. Involved in centriole duplication. Positively regulates CEP63 centrosomal localization. Required for WDR62 centrosomal localization and promotes the centrosomal localization of CDK2. May play a role in cilium assembly. In Homo sapiens (Human), this protein is Protein moonraker (KIAA0753).